The primary structure comprises 191 residues: Bcl-2-like protein 10 (191 aa).

The BH1 signature appears at 79 to 98 (LSKDQDFSWSQLVMLLAFAG). Lysine 112 participates in a covalent cross-link: Glycyl lysine isopeptide (Lys-Gly) (interchain with G-Cter in ubiquitin). Positions 144 to 155 (RLEALGGWDGFC) match the BH2 motif. The chain crosses the membrane as a helical span at residues 166–183 (FWRRLLIQAFLSGFFATA).

It belongs to the Bcl-2 family. In terms of assembly, interacts with BAX. Interacts with BCL2 and BCL2L1/BCLX. Interacts with APAF1. Interacts with ITPR1, ITPR2 and ITPR3; the interaction with ITPR1 is increased in the presence of AHCLY1. Interacts with AHCYL1. Interacts with HIP1R (via ENTH and I/LWEQ domains). Interacts with CASP9. Interacts with BCL2L11/BIM. Interacts with BIK. Interacts with UBQLN4. Interacts with NME2/NM23-H2. Interacts with PMAIP1/NOXA. Interacts with TPX2. Interacts with UBQLN1; in the cytoplasm. Interacts (via BH1 domain) with BECN1. The cofactor is Ca(2+). In terms of processing, monoubiquitinated by UBQLN1; results in stabilization of BCL2L10 protein abundance and in relocalization from mitochondria to cytoplasm. In terms of tissue distribution, expressed in multiple embryonic tissues. Restricted to the ovary and testis in adult mice.

The protein localises to the mitochondrion. The protein resides in the nucleus membrane. It is found in the endoplasmic reticulum. It localises to the cytoplasm. Its subcellular location is the cytoskeleton. The protein localises to the spindle. Its function is as follows. Promotes cell survival by suppressing apoptosis induced by BAX but not BAK. Increases binding of AHCYL1/IRBIT to ITPR1. Reduces ITPR1-mediated calcium release from the endoplasmic reticulum cooperatively with AHCYL1/IRBIT under normal cellular conditions. Under apoptotic stress conditions, dissociates from ITPR1 and is displaced from mitochondria-associated endoplasmic reticulum membranes, leading to increased Ca(2+) transfer to mitochondria which promotes apoptosis. Required for the correct formation of the microtubule organizing center during oocyte cell division, potentially via regulation of protein abundance and localization of other microtubule organizing center components such as AURKA and TPX2. The polypeptide is Bcl-2-like protein 10 (Mus musculus (Mouse)).